We begin with the raw amino-acid sequence, 357 residues long: Protein pelota homolog (357 aa).

It belongs to the eukaryotic release factor 1 family. Pelota subfamily. In terms of assembly, monomer. The cofactor is a divalent metal cation.

The protein resides in the cytoplasm. May function in recognizing stalled ribosomes, interact with stem-loop structures in stalled mRNA molecules, and effect endonucleolytic cleavage of the mRNA. May play a role in the release non-functional ribosomes and degradation of damaged mRNAs. Has endoribonuclease activity. The chain is Protein pelota homolog from Methanocella arvoryzae (strain DSM 22066 / NBRC 105507 / MRE50).